A 330-amino-acid chain; its full sequence is Phosphate acyltransferase (330 aa).

The protein belongs to the PlsX family. Homodimer. Probably interacts with PlsY.

Its subcellular location is the cytoplasm. It carries out the reaction a fatty acyl-[ACP] + phosphate = an acyl phosphate + holo-[ACP]. It functions in the pathway lipid metabolism; phospholipid metabolism. Its function is as follows. Catalyzes the reversible formation of acyl-phosphate (acyl-PO(4)) from acyl-[acyl-carrier-protein] (acyl-ACP). This enzyme utilizes acyl-ACP as fatty acyl donor, but not acyl-CoA. The chain is Phosphate acyltransferase from Carboxydothermus hydrogenoformans (strain ATCC BAA-161 / DSM 6008 / Z-2901).